Consider the following 348-residue polypeptide: MVSNLLKVVLAIETSCDETAVAVVRSDKQVLSHKVLSQKEHVVYGGVVPEIASRAHINYLYDLTSQSIEESGCDLADIDAIAVTSGPGLIGGLIIGVMMAKAISSVTNKPIIEVNHLEAHTLLIRMFHDIDFPFLVLIISGGHCQFLIVHDVGCYQRLGSSLDDSLGEVFDKVARMLNLGYPGGPIIEKKSIMGDSKSFFLPRALINRFGCDFSFSGIKTAVRNIVVNQKYIDNDFICNISASFQDCIGDILVNRITNAIHMSQAINCKINKLVVTGGVAANHLLRNRISICVKDNNFEVLYPPTELCTDNGIMVGWAGIENLSKGYVSNLDFVPKARWPLESIKRSS.

Fe cation is bound by residues histidine 116 and histidine 120. Substrate is bound by residues 138-142, aspartate 171, glycine 184, and asparagine 282; that span reads IISGG. Aspartate 310 is a Fe cation binding site.

This sequence belongs to the KAE1 / TsaD family. The cofactor is Fe(2+).

Its subcellular location is the cytoplasm. It carries out the reaction L-threonylcarbamoyladenylate + adenosine(37) in tRNA = N(6)-L-threonylcarbamoyladenosine(37) in tRNA + AMP + H(+). Its function is as follows. Required for the formation of a threonylcarbamoyl group on adenosine at position 37 (t(6)A37) in tRNAs that read codons beginning with adenine. Is involved in the transfer of the threonylcarbamoyl moiety of threonylcarbamoyl-AMP (TC-AMP) to the N6 group of A37, together with TsaE and TsaB. TsaD likely plays a direct catalytic role in this reaction. In Ehrlichia ruminantium (strain Gardel), this protein is tRNA N6-adenosine threonylcarbamoyltransferase.